Here is a 260-residue protein sequence, read N- to C-terminus: Putative ATP-binding protein BAB2_1147 (260 aa).

Positions 5–228 (ISFNNVVMRY…DLPYPRTEAI (224 aa)) constitute an ABC transporter domain. 37–44 (GPSGCGKS) lines the ATP pocket.

This sequence belongs to the ABC transporter superfamily. As to quaternary structure, the complex is composed of two ATP-binding proteins (BAB2_1147), two transmembrane proteins (BAB2_1148) and a solute-binding protein (BAB2_1146).

It localises to the cell inner membrane. Probably part of an ABC transporter complex. Probably Responsible for energy coupling to the transport system. This is Putative ATP-binding protein BAB2_1147 from Brucella abortus (strain 2308).